The primary structure comprises 123 residues: Small ribosomal subunit protein uS13 (123 aa).

The interval 95–123 is disordered; it reads GLPVRGQKTKTNARTRKGPKKAVASKKKK.

It belongs to the universal ribosomal protein uS13 family. Part of the 30S ribosomal subunit. Forms a loose heterodimer with protein S19. Forms two bridges to the 50S subunit in the 70S ribosome.

Functionally, located at the top of the head of the 30S subunit, it contacts several helices of the 16S rRNA. In the 70S ribosome it contacts the 23S rRNA (bridge B1a) and protein L5 of the 50S subunit (bridge B1b), connecting the 2 subunits; these bridges are implicated in subunit movement. Contacts the tRNAs in the A and P-sites. The polypeptide is Small ribosomal subunit protein uS13 (Clostridium acetobutylicum (strain ATCC 824 / DSM 792 / JCM 1419 / IAM 19013 / LMG 5710 / NBRC 13948 / NRRL B-527 / VKM B-1787 / 2291 / W)).